The primary structure comprises 655 residues: Endoplasmic reticulum chaperone BiP (655 aa).

Positions 1-19 are cleaved as a signal peptide; that stretch reads MMKFTVVAAALLLLGAVRA. The segment at 1–81 is required for interaction with ELAPOR1; the sequence is MMKFTVVAAA…EGERLIGDAA (81 aa). 37–40 is a binding site for ATP; the sequence is GTTY. Phosphoserine is present on Ser87. Lys97 is a binding site for ATP. Residue Lys126 is modified to N6-acetyllysine. Residues 126 to 281 form a nucleotide-binding (NBD) region; the sequence is KPYIQVDIGG…KKKTGKDVRK (156 aa). A 3'-nitrotyrosine modification is found at Tyr161. At Lys214 the chain carries N6-acetyllysine. 228–230 is an ATP binding site; that stretch reads GGT. Lys272 carries the N6-acetyllysine modification. 294–301 contacts ATP; it reads EKAKRALS. An N6-acetyllysine modification is found at Lys327. Lys353 is covalently cross-linked (Glycyl lysine isopeptide (Lys-Gly) (interchain with G-Cter in SUMO2)). N6-acetyllysine; alternate is present on Lys354. A Glycyl lysine isopeptide (Lys-Gly) (interchain with G-Cter in SUMO1); alternate cross-link involves residue Lys354. ATP is bound at residue 365-368; that stretch reads GSTR. The segment at 410-420 is interdomain linker; sequence QDTGDLVLLDV. Residues 421–501 are substrate-binding (SBD); sequence CPLTLGIETV…PRGVPQIEVT (81 aa). Lys448 bears the N6-succinyllysine mark. Arg493 carries the omega-N-methylarginine modification. O-AMP-threonine; alternate is present on Thr519. Thr519 is modified (phosphothreonine; alternate). Lys586 bears the N6,N6,N6-trimethyllysine; by METTL21A; in vitro mark. Position 586 is an N6,N6-dimethyllysine; alternate (Lys586). Lys586 is modified (N6-methyllysine; alternate). An N6-methyllysine modification is found at Lys592. Residues 632-655 form a disordered region; it reads ISKLYGSGGPPPTGEEDTSEKDEL. Phosphothreonine is present on residues Thr644 and Thr649. The span at 645 to 655 shows a compositional bias: acidic residues; it reads GEEDTSEKDEL. Ser650 is subject to Phosphoserine. Positions 652–655 match the Prevents secretion from ER motif; the sequence is KDEL.

It belongs to the heat shock protein 70 family. As to quaternary structure, monomer and homooligomer; homooligomerization via the interdomain linker inactivates the chaperone activity and acts as a storage of HSPA5/BiP molecules. Interacts with DNAJC1 (via J domain). Component of an EIF2 complex at least composed of CELF1/CUGBP1, CALR, CALR3, EIF2S1, EIF2S2, HSP90B1 and HSPA5. Part of a large chaperone multiprotein complex comprising DNAJB11, HSP90B1, HSPA5, HYOU, PDIA2, PDIA4, PDIA6, PPIB, SDF2L1, UGGT1 and very small amounts of ERP29, but not, or at very low levels, CALR nor CANX. Interacts with TMEM132A and TRIM21. May form a complex with ERLEC1, OS9, SEL1L and SYVN1. Interacts with DNAJC10. Interacts with DNAJB9/ERdj4; leading to recruit HSPA5/BiP to ERN1/IRE1. Interacts with ERN1/IRE1 (via luminal domain); the interaction takes place following interaction with DNAJB9/ERdj4 and leads to inactivate ERN1/IRE1, the interaction also competitively inhibits ERN1 interaction with MANF. Interacts directly with MANF (via SAP domain); the interaction inhibits ATP binding to HSPA5/BiP and subsequent nucleotide exchange. Interacts with ERN1 (via luminal domain); the interaction competitively inhibits ERN1 interaction with MANF. Interacts with EIF2AK3/PERK (via luminal domain); interaction leads to inactivate EIF2AK3/PERK. Interacts with MX1. Interacts with METTL23. Interacts with CEMIP; the interaction induces calcium leakage from the endoplasmic reticulum and cell migration. Interacts with PCSK4 form; the interaction takes place in the endoplasmic reticulum. Interacts with CIPC. Interacts with CCDC88B (via C-terminus); the interaction opposes ERN1-mediated JNK activation, protecting against apoptosis. Interacts with INPP5K; necessary for INPP5K localization at the endoplasmic reticulum. Interacts with MANF; the interaction is direct. Interacts with LOXL2; leading to activate the ERN1/IRE1-XBP1 pathway of the unfolded protein response. Interacts with CLU under stressed condition; interaction increases CLU protein stability; facilitates its retrotranslocation and redistribution to the mitochondria; cooperatively suppress stress-induced apoptosis by stabilizing mitochondrial membrane integrity. Interacts with CCDC47. Interacts with CLN3. Interacts with ELAPOR1; may regulate the function of HSPA5 in apoptosis and cell proliferation. Interacts with CASP7. Interacts with ILDR2; the interaction stabilizes ILDR2 expression. Interacts with ADAM7. In terms of processing, in unstressed cells, AMPylation at Thr-519 by FICD inactivates the chaperome activity: AMPylated form is locked in a relatively inert state and only weakly stimulated by J domain-containing proteins. In response to endoplasmic reticulum stress, de-AMPylation by the same protein, FICD, restores the chaperone activity. As to expression, expressed in sperm (at protein level).

Its subcellular location is the endoplasmic reticulum lumen. The protein resides in the melanosome. It is found in the cytoplasm. The protein localises to the cell surface. The enzyme catalyses ATP + H2O = ADP + phosphate + H(+). Its activity is regulated as follows. The chaperone activity is regulated by ATP-induced allosteric coupling of the nucleotide-binding (NBD) and substrate-binding (SBD) domains. In the ADP-bound and nucleotide-free (apo) states, the two domains have little interaction. In contrast, in the ATP-bound state the two domains are tightly coupled, which results in drastically accelerated kinetics in both binding and release of polypeptide substrates. J domain-containing co-chaperones (DNAJB9/ERdj4 or DNAJC10/ERdj5) stimulate the ATPase activity and are required for efficient substrate recognition by HSPA5/BiP. Homooligomerization inactivates participating HSPA5/BiP protomers and probably act as reservoirs to store HSPA5/BiP molecules when they are not needed by the cell. Endoplasmic reticulum chaperone that plays a key role in protein folding and quality control in the endoplasmic reticulum lumen. Involved in the correct folding of proteins and degradation of misfolded proteins via its interaction with DNAJC10/ERdj5, probably to facilitate the release of DNAJC10/ERdj5 from its substrate. Acts as a key repressor of the EIF2AK3/PERK and ERN1/IRE1-mediated unfolded protein response (UPR). In the unstressed endoplasmic reticulum, recruited by DNAJB9/ERdj4 to the luminal region of ERN1/IRE1, leading to disrupt the dimerization of ERN1/IRE1, thereby inactivating ERN1/IRE1. Also binds and inactivates EIF2AK3/PERK in unstressed cells. Accumulation of misfolded protein in the endoplasmic reticulum causes release of HSPA5/BiP from ERN1/IRE1 and EIF2AK3/PERK, allowing their homodimerization and subsequent activation. Plays an auxiliary role in post-translational transport of small presecretory proteins across endoplasmic reticulum (ER). May function as an allosteric modulator for SEC61 channel-forming translocon complex, likely cooperating with SEC62 to enable the productive insertion of these precursors into SEC61 channel. Appears to specifically regulate translocation of precursors having inhibitory residues in their mature region that weaken channel gating. May also play a role in apoptosis and cell proliferation. The chain is Endoplasmic reticulum chaperone BiP from Mus musculus (Mouse).